Consider the following 198-residue polypeptide: MAKVLVLYYSMYGHIETMARAVAEGASKVDGAEVVVKRVPETMPPQLFEKAGGKTQTAPVATPQELADYDAIIFGTPTRFGNMSGQMRTFLDQTGGLWASGALYGKLASVFSSTGTGGGQEQTITSTWTTLAHHGMVIVPIGYAAQELFDVSQVRGGTPYGATTIAGGDGSRQPSQEELSIARYQGEYVAGLAVKLNG.

The Flavodoxin-like domain occupies 4 to 189 (VLVLYYSMYG…SIARYQGEYV (186 aa)). FMN-binding positions include 10–15 (SMYGHI) and 78–80 (TRF). Y12 contacts NAD(+). W98 lines the substrate pocket. FMN contacts are provided by residues 113–118 (STGTGG) and H133.

It belongs to the WrbA family. FMN serves as cofactor.

The catalysed reaction is a quinone + NADH + H(+) = a quinol + NAD(+). It carries out the reaction a quinone + NADPH + H(+) = a quinol + NADP(+). The protein is NAD(P)H dehydrogenase (quinone) of Escherichia coli (strain SE11).